The chain runs to 461 residues: D-phenylhydantoinase (461 aa).

3 residues coordinate a divalent metal cation: histidine 59, histidine 61, and lysine 151. Lysine 151 carries the N6-carboxylysine modification. Residue tyrosine 156 participates in substrate binding. 2 residues coordinate a divalent metal cation: histidine 182 and histidine 239. Serine 286 provides a ligand contact to substrate. A divalent metal cation is bound at residue aspartate 313. Asparagine 335 contributes to the substrate binding site.

This sequence belongs to the metallo-dependent hydrolases superfamily. Hydantoinase/dihydropyrimidinase family. Homotetramer. Zn(2+) serves as cofactor. The cofactor is Ni(2+). It depends on Co(2+) as a cofactor. Requires Mn(2+) as cofactor. In terms of processing, carboxylation allows a single lysine to coordinate two divalent metal cations.

It carries out the reaction D-5-phenylhydantoin + H2O = N-carbamoyl-D-phenylglycine + H(+). Catalyzes the stereospecific hydrolysis of the cyclic amide bond of D-hydantoin derivatives with an aromatic side chains at the 5'-position. Has no activity on dihydropyrimidines. The physiological function is unknown. This Escherichia coli (strain K12) protein is D-phenylhydantoinase (hyuA).